Consider the following 329-residue polypeptide: Glycerol-3-phosphate dehydrogenase [NAD(P)+] (329 aa).

Residues tryptophan 11, arginine 30, and lysine 103 each contribute to the NADPH site. Positions 103, 132, and 134 each coordinate sn-glycerol 3-phosphate. Alanine 136 lines the NADPH pocket. Sn-glycerol 3-phosphate-binding residues include lysine 187, aspartate 240, serine 250, arginine 251, and asparagine 252. Lysine 187 serves as the catalytic Proton acceptor. Arginine 251 lines the NADPH pocket. 2 residues coordinate NADPH: valine 275 and glutamate 277.

The protein belongs to the NAD-dependent glycerol-3-phosphate dehydrogenase family.

It localises to the cytoplasm. It carries out the reaction sn-glycerol 3-phosphate + NAD(+) = dihydroxyacetone phosphate + NADH + H(+). The enzyme catalyses sn-glycerol 3-phosphate + NADP(+) = dihydroxyacetone phosphate + NADPH + H(+). The protein operates within membrane lipid metabolism; glycerophospholipid metabolism. Its function is as follows. Catalyzes the reduction of the glycolytic intermediate dihydroxyacetone phosphate (DHAP) to sn-glycerol 3-phosphate (G3P), the key precursor for phospholipid synthesis. In Nitrosomonas eutropha (strain DSM 101675 / C91 / Nm57), this protein is Glycerol-3-phosphate dehydrogenase [NAD(P)+].